Consider the following 275-residue polypeptide: Protein FAM210A (275 aa).

The tract at residues 68–108 is disordered; the sequence is SSQPADTPRKVPEEREPLTSATEVPKQSPVESDASDPDPLQ. The span at 74-84 shows a compositional bias: basic and acidic residues; the sequence is TPRKVPEEREP. A DUF1279 domain is found at 109–221; the sequence is DKSISLVQRF…GYMSTPPPVK (113 aa). Residues 128–148 form a helical membrane-spanning segment; that stretch reads VMIPVHLVTSTVWFGSFYYAA. A coiled-coil region spans residues 221 to 271; sequence KEYLQDRMEETKDKITEKMEETKDKITEKMEETKDKITEKIQETKDKVSFK.

This sequence belongs to the FAM210 family. As to quaternary structure, interacts with ATAD3A.

It is found in the membrane. Its subcellular location is the mitochondrion. The protein resides in the cytoplasm. Functionally, may play a role in the structure and strength of both muscle and bone. The chain is Protein FAM210A (FAM210A) from Gallus gallus (Chicken).